The following is a 561-amino-acid chain: Shugoshin 1 (561 aa).

The necessary for interaction with PPP2CA and PPP2R1A stretch occupies residues Met-1–Gly-176. Residues Leu-7 to Cys-89 are a coiled coil. Position 14 is a phosphoserine; by NEK2 (Ser-14). A D-box 1 motif is present at residues Arg-192–Asn-200. Ser-256 is modified (phosphoserine). 2 disordered regions span residues Ile-260 to Ser-331 and Phe-348 to Leu-441. Over residues Lys-267–Arg-296 the composition is skewed to basic and acidic residues. A coiled-coil region spans residues Leu-273–Lys-313. Basic residues predominate over residues Lys-297–Ser-307. Residues Lys-308–Lys-318 are compositionally biased toward basic and acidic residues. Positions Lys-310–Asn-312 match the KEN box motif. Low complexity predominate over residues Ser-364–Gly-375. Residues Tyr-388 to Arg-398 are compositionally biased toward polar residues. Over residues Lys-410–Lys-421 the composition is skewed to basic and acidic residues. Positions Pro-422–Thr-433 are enriched in low complexity. Phosphoserine is present on Ser-436. The short motif at His-438–Asn-446 is the D-box 2 element. The PXVXL/I motif signature appears at Pro-451–Ile-455. A D-box 3 motif is present at residues Arg-457 to Asn-465. Position 507 is a phosphoserine; by NEK2 (Ser-507).

Belongs to the shugoshin family. Interacts with PPP2CA (or PPP2CB), PPP2R1B, PPP2R5A, PPP2R5B, PPP2R5C, PPP2R5D, PPP2R5E, SET, LRRC59, RBM10 (or RBM5), RPL10A, RPL28, RPL7, RPL7A and RPLP1. Interaction with protein phosphatase 2A occurs most probably through direct binding to the regulatory B56 subunits: PPP2R1B, PPP2R5A, PPP2R5B, PPP2R5C, PPP2R5D, PPP2R5E. Interacts with PPP2R1A and NEK2. Isoform 3 interacts with PLK1. Interacts with CDCA8. In terms of processing, ubiquitinated and degraded during mitotic exit by APC/C-Cdh1. Post-translationally, phosphorylation by NEK2 is essential for chromosome congression in mitosis and for the proper attachment of spindle microtubule to the kinetochore. Phosphorylated by PLK1 and AUKRB. As to expression, widely expressed. Highly expressed in testis. Expressed in lung, small intestine, breast, liver and placenta. Strongly overexpressed in 90% of breast cancers tested.

It is found in the nucleus. It localises to the chromosome. Its subcellular location is the centromere. The protein resides in the kinetochore. The protein localises to the cytoplasm. It is found in the cytoskeleton. It localises to the spindle pole. Its subcellular location is the microtubule organizing center. The protein resides in the centrosome. The protein localises to the nucleus speckle. In terms of biological role, plays a central role in chromosome cohesion during mitosis by preventing premature dissociation of cohesin complex from centromeres after prophase, when most of cohesin complex dissociates from chromosomes arms. May act by preventing phosphorylation of the STAG2 subunit of cohesin complex at the centromere, ensuring cohesin persistence at centromere until cohesin cleavage by ESPL1/separase at anaphase. Essential for proper chromosome segregation during mitosis and this function requires interaction with PPP2R1A. Its phosphorylated form is necessary for chromosome congression and for the proper attachment of spindle microtubule to the kinetochore. Necessary for kinetochore localization of PLK1 and CENPF. May play a role in the tension sensing mechanism of the spindle-assembly checkpoint by regulating PLK1 kinetochore affinity. Isoform 3 plays a role in maintaining centriole cohesion involved in controlling spindle pole integrity. Involved in centromeric enrichment of AUKRB in prometaphase. This is Shugoshin 1 from Homo sapiens (Human).